Here is a 492-residue protein sequence, read N- to C-terminus: Transcript termination protein A18 (492 aa).

Positions 100-256 constitute a Helicase ATP-binding domain; it reads MIELKRPLYI…NSIINIAKLS (157 aa). 113–120 is a binding site for ATP; it reads LACGFGKT. The short motif at 206–209 is the DESH box element; sequence DESH.

The protein belongs to the helicase family. Poxviruses subfamily. Interacts with G2. Might be part of a transcription complex composed at least of G2, A18, and H5.

Its subcellular location is the virion. In terms of biological role, DNA helicase which seems to act as a postreplicative transcription termination factor. Involved in ATP-dependent release of nascent RNA. Forms a stable complex with single-stranded DNA, and to a lesser extent RNA. The protein is Transcript termination protein A18 of Bos taurus (Bovine).